A 676-amino-acid chain; its full sequence is UvrABC system protein B (676 aa).

In terms of domain architecture, Helicase ATP-binding spans 26–414; sequence EGLDAGLAHQ…SAGEIADQVV (389 aa). 39-46 lines the ATP pocket; that stretch reads GVTGSGKT. The Beta-hairpin motif lies at 92–115; it reads YYDYYQPEAYVPTTDTFIEKDSSV. The 167-residue stretch at 432–598 folds into the Helicase C-terminal domain; sequence QVDDLLSEIR…ALKRNIKDIM (167 aa). Positions 636 to 671 constitute a UVR domain; sequence EKEITKLEAQMYKHAQDLEFELAAQKRDEIEKLRQQ.

This sequence belongs to the UvrB family. In terms of assembly, forms a heterotetramer with UvrA during the search for lesions. Interacts with UvrC in an incision complex.

Its subcellular location is the cytoplasm. In terms of biological role, the UvrABC repair system catalyzes the recognition and processing of DNA lesions. A damage recognition complex composed of 2 UvrA and 2 UvrB subunits scans DNA for abnormalities. Upon binding of the UvrA(2)B(2) complex to a putative damaged site, the DNA wraps around one UvrB monomer. DNA wrap is dependent on ATP binding by UvrB and probably causes local melting of the DNA helix, facilitating insertion of UvrB beta-hairpin between the DNA strands. Then UvrB probes one DNA strand for the presence of a lesion. If a lesion is found the UvrA subunits dissociate and the UvrB-DNA preincision complex is formed. This complex is subsequently bound by UvrC and the second UvrB is released. If no lesion is found, the DNA wraps around the other UvrB subunit that will check the other stand for damage. This is UvrABC system protein B from Vibrio vulnificus (strain CMCP6).